The following is a 318-amino-acid chain: UDP-N-acetylenolpyruvoylglucosamine reductase (318 aa).

The FAD-binding PCMH-type domain maps to 39–202; it reads VGGPADLLVR…TRVQLTLRPG (164 aa). Arg182 is a catalytic residue. Basic and acidic residues predominate over residues 214–223; the sequence is DRDGRRRTQP. Residues 214-235 are disordered; it reads DRDGRRRTQPLDRPTFGSTFTN. Catalysis depends on Ser231, which acts as the Proton donor. Residue Glu301 is part of the active site.

It belongs to the MurB family. It depends on FAD as a cofactor.

Its subcellular location is the cytoplasm. It catalyses the reaction UDP-N-acetyl-alpha-D-muramate + NADP(+) = UDP-N-acetyl-3-O-(1-carboxyvinyl)-alpha-D-glucosamine + NADPH + H(+). It functions in the pathway cell wall biogenesis; peptidoglycan biosynthesis. Its function is as follows. Cell wall formation. The sequence is that of UDP-N-acetylenolpyruvoylglucosamine reductase from Anaeromyxobacter sp. (strain Fw109-5).